A 294-amino-acid polypeptide reads, in one-letter code: Acetylglutamate kinase (294 aa).

Substrate-binding positions include 60 to 61, R82, and N186; that span reads GG.

The protein belongs to the acetylglutamate kinase family. ArgB subfamily.

The protein localises to the cytoplasm. It carries out the reaction N-acetyl-L-glutamate + ATP = N-acetyl-L-glutamyl 5-phosphate + ADP. Its pathway is amino-acid biosynthesis; L-arginine biosynthesis; N(2)-acetyl-L-ornithine from L-glutamate: step 2/4. Its function is as follows. Catalyzes the ATP-dependent phosphorylation of N-acetyl-L-glutamate. The protein is Acetylglutamate kinase of Methanospirillum hungatei JF-1 (strain ATCC 27890 / DSM 864 / NBRC 100397 / JF-1).